The following is a 424-amino-acid chain: MAAGPISERNQDATVYVGGLDEKVSEPLLWELFLQAGPVVNTHMPKDRVTGQHQGYGFVEFLSEEDADYAIKIMNMIKLYGKPIRVNKASAHNKNLDVGANIFIGNLDPEIDEKLLYDTFSAFGVILQTPKIMRDPDTGNSKGYAFINFASFDASDAAIEAMNGQYLCNRPITVSYAFKKDSKGERHGSAAERLLAAQNPLSQADRPHQLFADAPPPPSAPNPVVSSLGSGLPPPGMPPPGSFPPPVPPPGALPPGIPPAMPPPPMPPGAGGHGPPAAGTPGAGHPGHGHSHPHPFPPGGMPHPGMSQMQLAHHGPHGLGHPHAGPPGSGGQPPPRPPPGMPHPGPPPMGMPPRGPPFGSPMGHPGPMPPHGMRGPPPLMPPHGYTGPPRPPPYGYQRGPLPPPRPTPRPPVPPRGPLRGPLPQ.

N-acetylalanine is present on alanine 2. 2 consecutive RRM domains span residues 13–91 and 100–179; these read ATVY…KASA and ANIF…YAFK. Tyrosine 56 bears the Phosphotyrosine mark. The disordered stretch occupies residues 207–424; the sequence is PHQLFADAPP…RGPLRGPLPQ (218 aa). Residues 222-231 show a composition bias toward low complexity; sequence NPVVSSLGSG. Pro residues predominate over residues 232-268; sequence LPPPGMPPPGSFPPPVPPPGALPPGIPPAMPPPPMPP. Positions 303-323 are enriched in low complexity; that stretch reads HPGMSQMQLAHHGPHGLGHPH. Composition is skewed to pro residues over residues 332-381 and 388-424; these read QPPP…PLMP and PPRP…PLPQ.

It belongs to the SF3B4 family. As to quaternary structure, component of the 17S U2 SnRNP complex, a ribonucleoprotein complex that contains small nuclear RNA (snRNA) U2 and a number of specific proteins. Part of the SF3B subcomplex of the 17S U2 SnRNP complex. SF3B associates with the splicing subcomplex SF3A and a 12S RNA unit to form the U2 small nuclear ribonucleoproteins complex (U2 snRNP). SF3B4 has been found in complex spliceosome 'B' and 'C' as well. Component of the minor (U12-type spliceosome) spliceosome. Found in a complex with PRMT9, SF3B2 and SF3B4.

Its subcellular location is the nucleus. Functionally, component of the 17S U2 SnRNP complex of the spliceosome, a large ribonucleoprotein complex that removes introns from transcribed pre-mRNAs. The 17S U2 SnRNP complex (1) directly participates in early spliceosome assembly and (2) mediates recognition of the intron branch site during pre-mRNA splicing by promoting the selection of the pre-mRNA branch-site adenosine, the nucleophile for the first step of splicing. Within the 17S U2 SnRNP complex, SF3B4 is part of the SF3B subcomplex, which is required for 'A' complex assembly formed by the stable binding of U2 snRNP to the branchpoint sequence in pre-mRNA. Sequence independent binding of SF3A and SF3B subcomplexes upstream of the branch site is essential, it may anchor U2 snRNP to the pre-mRNA. May also be involved in the assembly of the 'E' complex. Also acts as a component of the minor spliceosome, which is involved in the splicing of U12-type introns in pre-mRNAs. In Rattus norvegicus (Rat), this protein is Splicing factor 3B subunit 4 (Sf3b4).